Reading from the N-terminus, the 70-residue chain is Small ribosomal subunit protein bS18c (70 aa).

This sequence belongs to the bacterial ribosomal protein bS18 family. Part of the 30S ribosomal subunit.

It localises to the plastid. Its subcellular location is the chloroplast. The protein is Small ribosomal subunit protein bS18c of Pyropia yezoensis (Susabi-nori).